Here is a 108-residue protein sequence, read N- to C-terminus: BH3-like motif-containing cell death inducer (108 aa).

A BH3-like motif is present at residues 5 to 12 (LPIEGQEI).

Ubiquitously expressed.

The protein localises to the cytoplasm. The protein resides in the mitochondrion. Functionally, functions as a proapoptotic molecule through the caspase-dependent mitochondrial pathway of cell death. This is BH3-like motif-containing cell death inducer (BLID) from Homo sapiens (Human).